Reading from the N-terminus, the 247-residue chain is Uridylate kinase (247 aa).

Residue 17–20 (KFSG) participates in ATP binding. G59 is a binding site for UMP. Positions 60 and 64 each coordinate ATP. UMP is bound by residues D79 and 140–147 (TGNPFFTT). ATP is bound by residues T167, Y173, and D176.

The protein belongs to the UMP kinase family. Homohexamer.

It localises to the cytoplasm. It catalyses the reaction UMP + ATP = UDP + ADP. It functions in the pathway pyrimidine metabolism; CTP biosynthesis via de novo pathway; UDP from UMP (UMPK route): step 1/1. Its activity is regulated as follows. Inhibited by UTP. Its function is as follows. Catalyzes the reversible phosphorylation of UMP to UDP. This chain is Uridylate kinase, found in Legionella pneumophila (strain Lens).